The chain runs to 659 residues: MESGRRPIVPYTGPVPDVKKLLTENRFARLADLVVPLEVLGETDFVRHIHAQFENLSRDEMDELVLARTVAINSAPSLFSILLMAEETCSYFSAIDRLDIPVNPYDPYASTLSALKHATFSKLNVAKLSCMMSNGERPPSASSDYDFLKKIASGNGATVKSFSRSSESTVAPFPAATKQVPDISDIREFDFETFRHPFQKVICFLATIEKVISEIKGHRAPGCIAGGPINPKDRSRYIRDYDKQGIMRRYKDGCIIGLVKQGFCEHACNDNACRRRCKFALSVPYNLGMVFCPPTENSSVEDMDAYFERNRCPTRNGSFDDSRSATSGDGSSCSSAHKVTTPTDGVMMPEFPFSDQTDTSNNGTVRFSERRVSSSSKHRRRSNKHISPLDRPNDYHYQKNQPTPSDEKRYYHGSGSSSTEAVSTASAPLTGSAANQHPQHCGGQSGSDTGVISRGEGRHHGSHNGIPDFVSRSPVTTPPEVFSPERRSSEERSSSDQRRKSPLSRSASATSGGSKRRSFVDSPPRHESEDEDEDSDSSSSEAQKDRFKKRSGSRSNTPPSSPSKPDSAPAASASPGGDGGNDSDDGATEKGVTSNAKESVRVSERFETGDKSPTFIETEDESDDEDDQMSITSYDHSESSSAESGSETDGEDGESDMTL.

Zn(2+) is bound by residues Cys-130, His-266, Cys-268, and Cys-273. A CHC2-type zinc finger spans residues 130 to 273 (CMMSNGERPP…CEHACNDNAC (144 aa)). Positions 317–659 (GSFDDSRSAT…GEDGESDMTL (343 aa)) are disordered. Low complexity predominate over residues 324–336 (SATSGDGSSCSSA). Over residues 354-365 (SDQTDTSNNGTV) the composition is skewed to polar residues. The segment covering 387-397 (SPLDRPNDYHY) has biased composition (basic and acidic residues). Residues 413 to 427 (GSGSSSTEAVSTASA) are compositionally biased toward low complexity. Over residues 483–499 (SPERRSSEERSSSDQRR) the composition is skewed to basic and acidic residues. A compositionally biased stretch (polar residues) spans 503 to 513 (LSRSASATSGG). Residues 553–575 (SRSNTPPSSPSKPDSAPAASASP) show a composition bias toward low complexity. Residues 598–610 (ESVRVSERFETGD) are compositionally biased toward basic and acidic residues. Acidic residues-rich tracts occupy residues 617–628 (ETEDESDDEDDQ) and 646–659 (SETDGEDGESDMTL).

The protein belongs to the HHV-1 ICP27 protein family.

It localises to the virion tegument. It is found in the virion. Its subcellular location is the host nucleus. The protein localises to the host cytoplasm. Its function is as follows. Immediate early (EI) protein that plays many roles during productive infection including regulation of viral gene expression and nuclear export of intronless viral RNAs. This chain is mRNA export factor ICP27 homolog, found in Elephantid herpesvirus 1 (isolate Asian elephant/Berlin/Kiba/1998) (EIHV-1).